The following is a 421-amino-acid chain: Nuclear envelope integral membrane protein 2 (421 aa).

Positions 1–22 (MPPGSWWLVLWLPPLATLPAGA) are cleaved as a signal peptide. A run of 5 helical transmembrane segments spans residues 147–167 (NVVDFRLFLVFATGIFLFFYA), 175–195 (VFYYSSGTVLGILMTLVFVLL), 206–226 (TFGALMIGCWFASVYVLCQLM), 232–252 (LWCGNRIYVLGYVLVVGLCSF), and 279–299 (LVLVYTGMAISQFAYAVMILL).

The protein belongs to the NEMP family.

It localises to the nucleus inner membrane. This chain is Nuclear envelope integral membrane protein 2 (Nemp2), found in Rattus norvegicus (Rat).